The sequence spans 340 residues: Putative phosphatidylcholine:ceramide cholinephosphotransferase 3 (340 aa).

The segment at 1–25 (MGSVSKTVISARGASPDDEQNGTKN) is disordered. 4 helical membrane-spanning segments follow: residues 36–56 (CIFL…VLAY), 81–101 (SSLG…LLVI), 178–198 (LLFS…AYYL), and 202–222 (IKPL…CMTI). The active site involves histidine 183. Over 223-340 (SRTHYTIDVV…SSSSTYPLPC (118 aa)) the chain is Cytoplasmic. Residues histidine 226 and aspartate 230 contribute to the active site. The tract at residues 294 to 313 (STPRGQERGGASAESSDSSV) is disordered.

It belongs to the sphingomyelin synthase family.

It localises to the membrane. The catalysed reaction is an N-acyl-sphingoid base + a 1,2-diacyl-sn-glycero-3-phosphocholine = an N-(acyl)-sphingosylphosphocholine + a 1,2-diacyl-sn-glycerol. It carries out the reaction an N-acylsphing-4-enine + a 1,2-diacyl-sn-glycero-3-phosphocholine = a sphingomyelin + a 1,2-diacyl-sn-glycerol. The enzyme catalyses an N-acyl-15-methylhexadecasphing-4-enine + a 1,2-diacyl-sn-glycero-3-phosphocholine = an N-acyl-15-methylhexadecasphing-4-enine-1-phosphocholine + a 1,2-diacyl-sn-glycerol. The protein operates within lipid metabolism; sphingolipid metabolism. Its function is as follows. Bidirectional lipid cholinephosphotransferase capable of converting phosphatidylcholine (PC) and ceramide to sphingomyelin (SM) and diacylglycerol (DAG) and vice versa. Direction is dependent on the relative concentrations of DAG and ceramide as phosphocholine acceptors. Directly and specifically recognizes the choline head group on the substrate. Also requires two fatty chains on the choline-P donor molecule in order to be recognized efficiently as a substrate. Does not function strictly as a SM synthase. C.elegans contains specific sphingoid bases, which are unique or different in structure compared to the sphingoid bases found in other animals. Two examples of these distinctive compounds are: 15-methylhexadecasphinganine and 15-methylhexadecasphing-4-enine. The protein is Putative phosphatidylcholine:ceramide cholinephosphotransferase 3 (sms-3) of Caenorhabditis elegans.